The primary structure comprises 137 residues: MLQPKRTKFRKQQKLRNRGLAHRGNKVSFGEFGLQATSRGRITARQIEAGRRAISRHIKRGGKIWIRIFPDKPITQKPLEVRMGKGKGSVEYWVAQIQPGRVLYEITGVKEELAREAFARAAAKMPVQTTFVEKQVM.

It belongs to the universal ribosomal protein uL16 family. As to quaternary structure, part of the 50S ribosomal subunit.

In terms of biological role, binds 23S rRNA and is also seen to make contacts with the A and possibly P site tRNAs. This Francisella tularensis subsp. tularensis (strain FSC 198) protein is Large ribosomal subunit protein uL16.